A 126-amino-acid chain; its full sequence is S-adenosylmethionine decarboxylase proenzyme (126 aa).

The active-site Schiff-base intermediate with substrate; via pyruvic acid is serine 63. Serine 63 is modified (pyruvic acid (Ser); by autocatalysis). Histidine 68 (proton acceptor; for processing activity) is an active-site residue. The active-site Proton donor; for catalytic activity is the cysteine 83.

Belongs to the prokaryotic AdoMetDC family. Type 1 subfamily. As to quaternary structure, heterotetramer of two alpha and two beta chains arranged as a dimer of alpha/beta heterodimers. Pyruvate serves as cofactor. Post-translationally, is synthesized initially as an inactive proenzyme. Formation of the active enzyme involves a self-maturation process in which the active site pyruvoyl group is generated from an internal serine residue via an autocatalytic post-translational modification. Two non-identical subunits are generated from the proenzyme in this reaction, and the pyruvate is formed at the N-terminus of the alpha chain, which is derived from the carboxyl end of the proenzyme. The post-translation cleavage follows an unusual pathway, termed non-hydrolytic serinolysis, in which the side chain hydroxyl group of the serine supplies its oxygen atom to form the C-terminus of the beta chain, while the remainder of the serine residue undergoes an oxidative deamination to produce ammonia and the pyruvoyl group blocking the N-terminus of the alpha chain.

It carries out the reaction S-adenosyl-L-methionine + H(+) = S-adenosyl 3-(methylsulfanyl)propylamine + CO2. Its pathway is amine and polyamine biosynthesis; S-adenosylmethioninamine biosynthesis; S-adenosylmethioninamine from S-adenosyl-L-methionine: step 1/1. Catalyzes the decarboxylation of S-adenosylmethionine to S-adenosylmethioninamine (dcAdoMet), the propylamine donor required for the synthesis of the polyamines spermine and spermidine from the diamine putrescine. This Pelotomaculum thermopropionicum (strain DSM 13744 / JCM 10971 / SI) protein is S-adenosylmethionine decarboxylase proenzyme.